The chain runs to 498 residues: ATP synthase subunit beta, chloroplastic (498 aa).

172 to 179 (GGAGVGKT) provides a ligand contact to ATP.

The protein belongs to the ATPase alpha/beta chains family. F-type ATPases have 2 components, CF(1) - the catalytic core - and CF(0) - the membrane proton channel. CF(1) has five subunits: alpha(3), beta(3), gamma(1), delta(1), epsilon(1). CF(0) has four main subunits: a(1), b(1), b'(1) and c(9-12).

The protein resides in the plastid. It localises to the chloroplast thylakoid membrane. It catalyses the reaction ATP + H2O + 4 H(+)(in) = ADP + phosphate + 5 H(+)(out). In terms of biological role, produces ATP from ADP in the presence of a proton gradient across the membrane. The catalytic sites are hosted primarily by the beta subunits. This chain is ATP synthase subunit beta, chloroplastic, found in Calycanthus floridus var. glaucus (Eastern sweetshrub).